A 539-amino-acid chain; its full sequence is GMP synthase [glutamine-hydrolyzing] (539 aa).

The Glutamine amidotransferase type-1 domain maps to 4–202 (KVLILDFGSQ…VLEIAGAKPD (199 aa)). The active-site Nucleophile is the cysteine 81. Catalysis depends on residues histidine 176 and glutamate 178. In terms of domain architecture, GMPS ATP-PPase spans 203–395 (WVMRDHIDEA…LGLPHEMVYR (193 aa)). 230–236 (SGGVDSS) is an ATP binding site.

Homodimer.

It catalyses the reaction XMP + L-glutamine + ATP + H2O = GMP + L-glutamate + AMP + diphosphate + 2 H(+). It functions in the pathway purine metabolism; GMP biosynthesis; GMP from XMP (L-Gln route): step 1/1. Its function is as follows. Catalyzes the synthesis of GMP from XMP. The chain is GMP synthase [glutamine-hydrolyzing] from Ralstonia pickettii (strain 12J).